Consider the following 213-residue polypeptide: Large ribosomal subunit protein bL25 (213 aa).

It belongs to the bacterial ribosomal protein bL25 family. CTC subfamily. Part of the 50S ribosomal subunit; part of the 5S rRNA/L5/L18/L25 subcomplex. Contacts the 5S rRNA. Binds to the 5S rRNA independently of L5 and L18.

Its function is as follows. This is one of the proteins that binds to the 5S RNA in the ribosome where it forms part of the central protuberance. The protein is Large ribosomal subunit protein bL25 of Mesorhizobium japonicum (strain LMG 29417 / CECT 9101 / MAFF 303099) (Mesorhizobium loti (strain MAFF 303099)).